The following is a 370-amino-acid chain: F-box/kelch-repeat protein At4g38940 (370 aa).

Residues 18 to 64 (PCLISLLPEEIVVDIVARVPRCYYPTLSQVSRRFRSLVASPEIYKRR) form the F-box domain. Kelch repeat units follow at residues 131-177 (NIFV…LIDR), 178-230 (KIYV…VIGG), and 263-315 (SACV…SYTG).

As to quaternary structure, part of a SCF (ASK-cullin-F-box) protein ligase complex. Interacts with SKP1A/ASK1, SKP1B/ASK2, ASK11, ASK13 and ASK18.

The protein localises to the nucleus. The protein operates within protein modification; protein ubiquitination. Component of SCF(ASK-cullin-F-box) E3 ubiquitin ligase complexes, which may mediate the ubiquitination and subsequent proteasomal degradation of target proteins. In Arabidopsis thaliana (Mouse-ear cress), this protein is F-box/kelch-repeat protein At4g38940.